Reading from the N-terminus, the 93-residue chain is Small ribosomal subunit protein bS6 (93 aa).

It belongs to the bacterial ribosomal protein bS6 family.

In terms of biological role, binds together with bS18 to 16S ribosomal RNA. The polypeptide is Small ribosomal subunit protein bS6 (Phytoplasma australiense).